We begin with the raw amino-acid sequence, 570 residues long: Hydroxylamine reductase (570 aa).

[4Fe-4S] cluster is bound by residues Cys-5, Cys-8, Cys-17, and Cys-23. Hybrid [4Fe-2O-2S] cluster-binding residues include His-266, Glu-290, Cys-334, Cys-425, Cys-453, Cys-478, Glu-513, and Lys-515. Cys-425 bears the Cysteine persulfide mark.

This sequence belongs to the HCP family. [4Fe-4S] cluster is required as a cofactor. Hybrid [4Fe-2O-2S] cluster serves as cofactor.

The protein localises to the cytoplasm. The catalysed reaction is A + NH4(+) + H2O = hydroxylamine + AH2 + H(+). Functionally, catalyzes the reduction of hydroxylamine to form NH(3) and H(2)O. In Clostridium botulinum (strain Loch Maree / Type A3), this protein is Hydroxylamine reductase.